The sequence spans 117 residues: Immunoglobulin kappa variable 1D-17 (117 aa).

Residues 1–22 (MDMRVPAQLLGLLLLWFPGARC) form the signal peptide. The framework-1 stretch occupies residues 23-45 (NIQMTQSPSAMSASVGDRVTITC). An Ig-like domain is found at 23-117 (NIQMTQSPSA…YYCLQHNSYP (95 aa)). Cys-45 and Cys-110 are oxidised to a cystine. Residues 46–56 (RARQGISNYLA) form a complementarity-determining-1 region. The framework-2 stretch occupies residues 57–71 (WFQQKPGKVPKHLIY). The complementarity-determining-2 stretch occupies residues 72–78 (AASSLQS). The segment at 79–110 (GVPSRFSGSGSGTEFTLTISSLQPEDFATYYC) is framework-3. Residues 111-117 (LQHNSYP) form a complementarity-determining-3 region.

As to quaternary structure, immunoglobulins are composed of two identical heavy chains and two identical light chains; disulfide-linked.

It localises to the secreted. The protein resides in the cell membrane. In terms of biological role, v region of the variable domain of immunoglobulin light chains that participates in the antigen recognition. Immunoglobulins, also known as antibodies, are membrane-bound or secreted glycoproteins produced by B lymphocytes. In the recognition phase of humoral immunity, the membrane-bound immunoglobulins serve as receptors which, upon binding of a specific antigen, trigger the clonal expansion and differentiation of B lymphocytes into immunoglobulins-secreting plasma cells. Secreted immunoglobulins mediate the effector phase of humoral immunity, which results in the elimination of bound antigens. The antigen binding site is formed by the variable domain of one heavy chain, together with that of its associated light chain. Thus, each immunoglobulin has two antigen binding sites with remarkable affinity for a particular antigen. The variable domains are assembled by a process called V-(D)-J rearrangement and can then be subjected to somatic hypermutations which, after exposure to antigen and selection, allow affinity maturation for a particular antigen. The polypeptide is Immunoglobulin kappa variable 1D-17 (Homo sapiens (Human)).